The chain runs to 246 residues: MYTRYSYNPSLGRTYVYDNKFYKNLGSVIKNAKRKEHLALHEIEERTLDPLERYVVAEDPFLGPGKNQKLTLFKEIRIVKPDTMKLVVNWSGKEFLRETWTRFMEDSFPIVNDQEIMDVFLVINMRPTRPNRCFRFLAQHALRCDPDYVPHEVIRIVEPVYVGNNNEYRISLAKKGGGCPVMNLHSEYTHSFEEFINRVIWENFYKPIVYVGTDSGEEEEILLELSLVFKIKEFAPDAPLYNGPAY.

It belongs to the polyhedrin family.

Functionally, major component of the virus occlusion bodies, which are large proteinaceous structures (polyhedra), that protect the virus from the outside environment for extended periods until they are ingested by insect larvae. In Lepidoptera (butterflies and moths), this protein is Polyhedrin (PH).